The following is a 251-amino-acid chain: Chloride intracellular channel protein 5 (251 aa).

Residues 1 to 98 (MTDSATANGD…EEFLEETLTP (98 aa)) form a required for insertion into the membrane region. Residues 32–35 (CPFS) carry the G-site motif. The helical transmembrane segment at 34-54 (FSQRLFMILWLKGVVFNVTTV) threads the bilayer. Residues 101-241 (YPKLAARHRE…AADSEIELAY (141 aa)) form the GST C-terminal domain.

The protein belongs to the chloride channel CLIC family. As to quaternary structure, component of a multimeric complex consisting of several cytoskeletal proteins, including actin, ezrin, alpha-actinin, gelsolin, and IQGAP1. Interacts with AKAP9. Interacts with TPRN. TPRN, CLIC5 and PTPQR form concentric rings at the base of stereocilia and may form a complex. Interacts with EZR, MYO6 and RDX; the proteins may work together as a complex to stabilize linkages between the plasma membrane and subjacent actin cytoskeleton at the stereocilium base. Detected in cochlea, in cochlear and vestibular hair cell bundles in the organ of Corti (at protein level). Expressed neonatal and adult cardiomyocytes (at protein level).

The protein localises to the golgi apparatus. It localises to the cytoplasm. The protein resides in the cytoskeleton. Its subcellular location is the microtubule organizing center. It is found in the centrosome. The protein localises to the cell cortex. It localises to the membrane. The protein resides in the apical cell membrane. Its subcellular location is the mitochondrion. It is found in the cell projection. The protein localises to the stereocilium. The enzyme catalyses Na(+)(in) = Na(+)(out). It catalyses the reaction K(+)(in) = K(+)(out). It carries out the reaction chloride(in) = chloride(out). Inhibited by F-actin. Its function is as follows. In the soluble state, catalyzes glutaredoxin-like thiol disulfide exchange reactions with reduced glutathione as electron donor. Can insert into membranes and form non-selective ion channels almost equally permeable to Na(+), K(+) and Cl(-). Required for normal hearing. It is necessary for the formation of stereocilia in the inner ear and normal development of the organ of Corti. May play a role in the regulation of transepithelial ion absorption and secretion. Is required for the development and/or maintenance of the proper glomerular endothelial cell and podocyte architecture. Plays a role in formation of the lens suture in the eye, which is important for normal optical properties of the lens. This Rattus norvegicus (Rat) protein is Chloride intracellular channel protein 5 (Clic5).